The primary structure comprises 135 residues: Large ribosomal subunit protein uL16c (135 aa).

This sequence belongs to the universal ribosomal protein uL16 family. Part of the 50S ribosomal subunit.

The protein localises to the plastid. It is found in the chloroplast. This is Large ribosomal subunit protein uL16c from Ranunculus macranthus (Large buttercup).